We begin with the raw amino-acid sequence, 199 residues long: 5'-deoxynucleotidase HDDC2 (199 aa).

An N-acetylalanine modification is found at Ala2. Ser5 is modified (phosphoserine). Positions 41-143 constitute an HD domain; it reads VSDHMYRMAV…VKQLDQCEMI (103 aa). Residues His44, His72, Asp73, Glu76, Asp81, Ile82, and Asp138 each coordinate a divalent metal cation. Ser199 is subject to Phosphoserine.

Belongs to the HDDC2 family. In terms of assembly, homodimer. It depends on Mn(2+) as a cofactor. Co(2+) is required as a cofactor. Mg(2+) serves as cofactor.

It catalyses the reaction a 2'-deoxyribonucleoside 5'-phosphate + H2O = a 2'-deoxyribonucleoside + phosphate. Functionally, catalyzes the dephosphorylation of the nucleoside 5'-monophosphates deoxyadenosine monophosphate (dAMP), deoxycytidine monophosphate (dCMP), deoxyguanosine monophosphate (dGMP) and deoxythymidine monophosphate (dTMP). This is 5'-deoxynucleotidase HDDC2 (Hddc2) from Mus musculus (Mouse).